Here is a 521-residue protein sequence, read N- to C-terminus: Alkyl hydroperoxide reductase subunit F (521 aa).

Asp213 to Ile228 contributes to the FAD binding site. The cysteines at positions 344 and 347 are disulfide-linked. Residue Arg356–Ala370 coordinates NAD(+). FAD is bound at residue Thr477 to Asp487.

Belongs to the class-II pyridine nucleotide-disulfide oxidoreductase family. As to quaternary structure, homodimer. FAD serves as cofactor.

Its function is as follows. Serves to protect the cell against DNA damage by alkyl hydroperoxides. It can use either NADH or NADPH as electron donor for direct reduction of redox dyes or of alkyl hydroperoxides when combined with the AhpC protein. This chain is Alkyl hydroperoxide reductase subunit F (ahpF), found in Pseudomonas aeruginosa (strain ATCC 15692 / DSM 22644 / CIP 104116 / JCM 14847 / LMG 12228 / 1C / PRS 101 / PAO1).